We begin with the raw amino-acid sequence, 249 residues long: tRNA (guanine-N(1)-)-methyltransferase (249 aa).

S-adenosyl-L-methionine-binding positions include G118 and 138 to 143 (IGDYVL).

Belongs to the RNA methyltransferase TrmD family. Homodimer.

It is found in the cytoplasm. The enzyme catalyses guanosine(37) in tRNA + S-adenosyl-L-methionine = N(1)-methylguanosine(37) in tRNA + S-adenosyl-L-homocysteine + H(+). In terms of biological role, specifically methylates guanosine-37 in various tRNAs. This is tRNA (guanine-N(1)-)-methyltransferase from Alkaliphilus oremlandii (strain OhILAs) (Clostridium oremlandii (strain OhILAs)).